A 375-amino-acid chain; its full sequence is Neuropeptide Y receptor type 4 (375 aa).

At 1–39 (MNTSHLMASLSPAFLQGKNGTNPLDSLYNLSDGCQDSAD) the chain is on the extracellular side. Residues Asn-2, Asn-19, and Asn-29 are each glycosylated (N-linked (GlcNAc...) asparagine). The helical transmembrane segment at 40–60 (LLAFIITTYSVETVLGVLGNL) threads the bilayer. The Cytoplasmic segment spans residues 61 to 78 (CLIFVTTRQKEKSNVTNL). The chain crosses the membrane as a helical span at residues 79–99 (LIANLAFSDFLMCLICQPLTV). The Extracellular segment spans residues 100–116 (TYTIMDYWIFGEVLCKM). A disulfide bond links Cys-114 and Cys-201. The chain crosses the membrane as a helical span at residues 117-137 (LTFIQCMSVTVSILSLVLVAL). Over 138–155 (ERHQLIINPTGWKPSISQ) the chain is Cytoplasmic. The helical transmembrane segment at 156–176 (AYLGIVVIWFISCFLSLPFLA) threads the bilayer. The Extracellular segment spans residues 177–211 (NSILNDLFHYNHSKVVEFLEDKVVCFVSWSSDHHR). Asn-187 is a glycosylation site (N-linked (GlcNAc...) asparagine). A helical membrane pass occupies residues 212–232 (LIYTTFLLLFQYCVPLAFILV). Topologically, residues 233–262 (CYMRIYQRLQRQRRAFHTHTCSSRVGQMKR) are cytoplasmic. A helical transmembrane segment spans residues 263 to 283 (INGMLMAMVTAFAVLWLPLHV). The Extracellular portion of the chain corresponds to 284-301 (FNTLEDWYQEAIPACHGN). A helical transmembrane segment spans residues 302 to 322 (LIFLMCHLFAMASTCVNPFIY). Topologically, residues 323–375 (GFLNINFKKDIKALVLTCRCRPPQGEPEPLPLSTVHTDLSKGSMRMGSKSNVM) are cytoplasmic. Cys-340 carries S-palmitoyl cysteine lipidation.

This sequence belongs to the G-protein coupled receptor 1 family. As to expression, detected in colon and brain.

It is found in the cell membrane. In terms of biological role, g protein-coupled receptor for PPY/pancreatic polypeptide/PP that is negatively coupled to cAMP. Has much lower affinity for the NPY/neuropeptide Y and PYY/peptide YY. In Rattus norvegicus (Rat), this protein is Neuropeptide Y receptor type 4 (Npy4r).